A 720-amino-acid chain; its full sequence is Phosphoribosylformylglycinamidine synthase subunit PurL (720 aa).

His47 is a catalytic residue. Positions 50 and 89 each coordinate ATP. Glu91 is a binding site for Mg(2+). Substrate is bound by residues 92-95 (SHNH) and Arg114. The Proton acceptor role is filled by His93. Residue Asp115 coordinates Mg(2+). Position 238 (Gln238) interacts with substrate. Asp266 serves as a coordination point for Mg(2+). Residue 310–312 (ESQ) coordinates substrate. Positions 488 and 525 each coordinate ATP. A Mg(2+)-binding site is contributed by Asn526. Residue Ser528 participates in substrate binding.

The protein belongs to the FGAMS family. Monomer. Part of the FGAM synthase complex composed of 1 PurL, 1 PurQ and 2 PurS subunits.

The protein localises to the cytoplasm. It carries out the reaction N(2)-formyl-N(1)-(5-phospho-beta-D-ribosyl)glycinamide + L-glutamine + ATP + H2O = 2-formamido-N(1)-(5-O-phospho-beta-D-ribosyl)acetamidine + L-glutamate + ADP + phosphate + H(+). It participates in purine metabolism; IMP biosynthesis via de novo pathway; 5-amino-1-(5-phospho-D-ribosyl)imidazole from N(2)-formyl-N(1)-(5-phospho-D-ribosyl)glycinamide: step 1/2. Functionally, part of the phosphoribosylformylglycinamidine synthase complex involved in the purines biosynthetic pathway. Catalyzes the ATP-dependent conversion of formylglycinamide ribonucleotide (FGAR) and glutamine to yield formylglycinamidine ribonucleotide (FGAM) and glutamate. The FGAM synthase complex is composed of three subunits. PurQ produces an ammonia molecule by converting glutamine to glutamate. PurL transfers the ammonia molecule to FGAR to form FGAM in an ATP-dependent manner. PurS interacts with PurQ and PurL and is thought to assist in the transfer of the ammonia molecule from PurQ to PurL. This Cereibacter sphaeroides (strain KD131 / KCTC 12085) (Rhodobacter sphaeroides) protein is Phosphoribosylformylglycinamidine synthase subunit PurL.